The following is an 852-amino-acid chain: DNA double-strand break repair Rad50 ATPase (852 aa).

Asn-32, Gly-33, Ala-34, Gly-35, Lys-36, Ser-37, Ser-38, Arg-53, Tyr-54, Asp-59, Val-61, and Arg-63 together coordinate ATP. A Mg(2+)-binding site is contributed by Ser-37. Gln-142 is a binding site for Mg(2+). Coiled coils occupy residues 155-345 and 389-427; these read EITE…EELD and LLSI…QIAS. Residues 389–488 enclose the Zinc-hook domain; sequence LLSIEKTENE…SLSSLIEDLL (100 aa). The Zn(2+) site is built by Cys-435 and Cys-438. Coiled-coil stretches lie at residues 460–488 and 534–711; these read DQKR…EDLL and KIEE…LFDK. Residue Asp-797 participates in Mg(2+) binding.

This sequence belongs to the SMC family. RAD50 subfamily. As to quaternary structure, homodimer. Forms a complex with Mre11. It depends on Zn(2+) as a cofactor.

It catalyses the reaction ATP + H2O = ADP + phosphate + H(+). Its function is as follows. Involved in DNA double-strand break repair (DSBR). The Rad50/Mre11 complex possesses single-strand endonuclease activity and ATP-dependent double-strand-specific 3'-5' exonuclease activity. Rad50 provides an ATP-dependent control of Mre11 by positioning DNA ends into the Mre11 active site: ATP-binding induces a large structural change from an open form with accessible Mre11 nuclease sites into a closed form. The protein is DNA double-strand break repair Rad50 ATPase of Thermotoga maritima (strain ATCC 43589 / DSM 3109 / JCM 10099 / NBRC 100826 / MSB8).